A 284-amino-acid chain; its full sequence is Prestalk D11 protein (284 aa).

The first 25 residues, 1–25 (MLNKLILLLILSSCLVLSVKSEVNV), serve as a signal peptide directing secretion. The stretch at 25 to 64 (VDCSLVRCAQPICKPHYRLNMTDSCCGRCEPCTDVACTLQ) is one A-1 repeat. A B-1 repeat occupies 65-82 (VKYCQDGEVPTGCCPCTL). The A-2 repeat unit spans residues 88–126 (DCSLVKCARPVCKPYYRLNMTDSCCGRCEPCTGVACTLQ). Residues 127 to 144 (IKYCKDGEVPTGCCPCTP) form a B-2 repeat. One copy of the C-1 repeat lies at 145 to 159 (QPTKKPDCSKVPCPK). Residues 161 to 178 (LKYCQEGELPTGCCPCTP) form a B-3 repeat. A C-2 repeat occupies 179-193 (QPTKKPDCSRVPCPK). The stretch at 195-212 (LKYCKEGELPTGCCPCTP) is one B-4 repeat. The C-3 repeat unit spans residues 213–228 (QPTKKPDCSDVMCTMD). Residues 229 to 246 (IRYCKNGELPTGCCPCTP) form a B-5 repeat. A C-4 repeat occupies 247–262 (QETKVPDCSKAMCTMD). The B-6 repeat unit spans residues 263–278 (IKYCKPGEKPFGCCPC).

In Dictyostelium discoideum (Social amoeba), this protein is Prestalk D11 protein (ampA).